The following is a 346-amino-acid chain: Uroporphyrinogen decarboxylase (346 aa).

Residues 23 to 27 (RQAGR), D72, Y155, S209, and H322 each bind substrate.

It belongs to the uroporphyrinogen decarboxylase family. As to quaternary structure, homodimer.

The protein resides in the cytoplasm. It carries out the reaction uroporphyrinogen III + 4 H(+) = coproporphyrinogen III + 4 CO2. Its pathway is porphyrin-containing compound metabolism; protoporphyrin-IX biosynthesis; coproporphyrinogen-III from 5-aminolevulinate: step 4/4. In terms of biological role, catalyzes the decarboxylation of four acetate groups of uroporphyrinogen-III to yield coproporphyrinogen-III. In Anaeromyxobacter sp. (strain Fw109-5), this protein is Uroporphyrinogen decarboxylase.